A 635-amino-acid chain; its full sequence is 1-deoxy-D-xylulose-5-phosphate synthase (635 aa).

Residues His78 and 119-121 (GHA) each bind thiamine diphosphate. Mg(2+) is bound at residue Asp151. Residues 152–153 (GA), Asn180, and Tyr291 contribute to the thiamine diphosphate site. Asn180 contacts Mg(2+). The disordered stretch occupies residues 305–325 (PAFEDRGGTPVTRGSDGRPPY). Glu374 contributes to the thiamine diphosphate binding site.

This sequence belongs to the transketolase family. DXPS subfamily. In terms of assembly, homodimer. Mg(2+) serves as cofactor. Thiamine diphosphate is required as a cofactor.

The enzyme catalyses D-glyceraldehyde 3-phosphate + pyruvate + H(+) = 1-deoxy-D-xylulose 5-phosphate + CO2. Its pathway is metabolic intermediate biosynthesis; 1-deoxy-D-xylulose 5-phosphate biosynthesis; 1-deoxy-D-xylulose 5-phosphate from D-glyceraldehyde 3-phosphate and pyruvate: step 1/1. Its function is as follows. Catalyzes the acyloin condensation reaction between C atoms 2 and 3 of pyruvate and glyceraldehyde 3-phosphate to yield 1-deoxy-D-xylulose-5-phosphate (DXP). The sequence is that of 1-deoxy-D-xylulose-5-phosphate synthase from Rhodopirellula baltica (strain DSM 10527 / NCIMB 13988 / SH1).